Consider the following 352-residue polypeptide: Protein RecA (352 aa).

An ATP-binding site is contributed by 68–75 (GPESSGKT).

Belongs to the RecA family.

The protein localises to the cytoplasm. Functionally, can catalyze the hydrolysis of ATP in the presence of single-stranded DNA, the ATP-dependent uptake of single-stranded DNA by duplex DNA, and the ATP-dependent hybridization of homologous single-stranded DNAs. It interacts with LexA causing its activation and leading to its autocatalytic cleavage. The protein is Protein RecA of Clostridium perfringens (strain SM101 / Type A).